The primary structure comprises 265 residues: Indole-3-glycerol phosphate synthase (265 aa).

The protein belongs to the TrpC family.

It catalyses the reaction 1-(2-carboxyphenylamino)-1-deoxy-D-ribulose 5-phosphate + H(+) = (1S,2R)-1-C-(indol-3-yl)glycerol 3-phosphate + CO2 + H2O. Its pathway is amino-acid biosynthesis; L-tryptophan biosynthesis; L-tryptophan from chorismate: step 4/5. This is Indole-3-glycerol phosphate synthase from Xanthomonas oryzae pv. oryzae (strain PXO99A).